A 331-amino-acid polypeptide reads, in one-letter code: Adenosine deaminase (331 aa).

Zn(2+)-binding residues include histidine 12 and histidine 14. 3 residues coordinate substrate: histidine 14, aspartate 16, and glycine 170. A Zn(2+)-binding site is contributed by histidine 197. Residue glutamate 200 is the Proton donor of the active site. Residue aspartate 278 participates in Zn(2+) binding. Aspartate 279 contributes to the substrate binding site.

Belongs to the metallo-dependent hydrolases superfamily. Adenosine and AMP deaminases family. Adenosine deaminase subfamily. The cofactor is Zn(2+).

The catalysed reaction is adenosine + H2O + H(+) = inosine + NH4(+). The enzyme catalyses 2'-deoxyadenosine + H2O + H(+) = 2'-deoxyinosine + NH4(+). In terms of biological role, catalyzes the hydrolytic deamination of adenosine and 2-deoxyadenosine. This Shewanella putrefaciens (strain CN-32 / ATCC BAA-453) protein is Adenosine deaminase.